A 383-amino-acid chain; its full sequence is Xylose/arabinose import ATP-binding protein XacK (383 aa).

Residues 4–240 (LTLDDVTKVY…PNNLFVAGFI (237 aa)) form the ABC transporter domain. Position 41–48 (41–48 (GPSGCGKS)) interacts with ATP.

The protein belongs to the ABC transporter superfamily. Carbohydrate uptake transporter-1 (CUT1) (TC 3.A.1.1) family. The complex is composed of two ATP-binding proteins (XacJ and XacK), two transmembrane proteins (XacH and XacI) and a solute-binding protein (XacG).

The protein resides in the cell membrane. The catalysed reaction is D-xylose(out) + ATP + H2O = D-xylose(in) + ADP + phosphate + H(+). It catalyses the reaction L-arabinose(out) + ATP + H2O = L-arabinose(in) + ADP + phosphate + H(+). Part of the ABC transporter complex XacGHIJK involved in the uptake of xylose and arabinose. Responsible for energy coupling to the transport system. The chain is Xylose/arabinose import ATP-binding protein XacK from Haloferax volcanii (strain ATCC 29605 / DSM 3757 / JCM 8879 / NBRC 14742 / NCIMB 2012 / VKM B-1768 / DS2) (Halobacterium volcanii).